Here is a 109-residue protein sequence, read N- to C-terminus: Large ribosomal subunit protein uL22 (109 aa).

This sequence belongs to the universal ribosomal protein uL22 family. In terms of assembly, part of the 50S ribosomal subunit.

Its function is as follows. This protein binds specifically to 23S rRNA; its binding is stimulated by other ribosomal proteins, e.g. L4, L17, and L20. It is important during the early stages of 50S assembly. It makes multiple contacts with different domains of the 23S rRNA in the assembled 50S subunit and ribosome. Functionally, the globular domain of the protein is located near the polypeptide exit tunnel on the outside of the subunit, while an extended beta-hairpin is found that lines the wall of the exit tunnel in the center of the 70S ribosome. The chain is Large ribosomal subunit protein uL22 from Herminiimonas arsenicoxydans.